Reading from the N-terminus, the 430-residue chain is CinA-like protein (430 aa).

The protein belongs to the CinA family.

This is CinA-like protein from Mycobacterium tuberculosis (strain ATCC 25177 / H37Ra).